We begin with the raw amino-acid sequence, 286 residues long: Phosphatidylserine decarboxylase proenzyme (286 aa).

Residues D90, H147, and S253 each act as charge relay system; for autoendoproteolytic cleavage activity in the active site. S253 acts as the Schiff-base intermediate with substrate; via pyruvic acid; for decarboxylase activity in catalysis. S253 is subject to Pyruvic acid (Ser); by autocatalysis.

It belongs to the phosphatidylserine decarboxylase family. PSD-B subfamily. Prokaryotic type I sub-subfamily. As to quaternary structure, heterodimer of a large membrane-associated beta subunit and a small pyruvoyl-containing alpha subunit. The cofactor is pyruvate. Is synthesized initially as an inactive proenzyme. Formation of the active enzyme involves a self-maturation process in which the active site pyruvoyl group is generated from an internal serine residue via an autocatalytic post-translational modification. Two non-identical subunits are generated from the proenzyme in this reaction, and the pyruvate is formed at the N-terminus of the alpha chain, which is derived from the carboxyl end of the proenzyme. The autoendoproteolytic cleavage occurs by a canonical serine protease mechanism, in which the side chain hydroxyl group of the serine supplies its oxygen atom to form the C-terminus of the beta chain, while the remainder of the serine residue undergoes an oxidative deamination to produce ammonia and the pyruvoyl prosthetic group on the alpha chain. During this reaction, the Ser that is part of the protease active site of the proenzyme becomes the pyruvoyl prosthetic group, which constitutes an essential element of the active site of the mature decarboxylase.

It localises to the cell membrane. It catalyses the reaction a 1,2-diacyl-sn-glycero-3-phospho-L-serine + H(+) = a 1,2-diacyl-sn-glycero-3-phosphoethanolamine + CO2. The protein operates within phospholipid metabolism; phosphatidylethanolamine biosynthesis; phosphatidylethanolamine from CDP-diacylglycerol: step 2/2. Functionally, catalyzes the formation of phosphatidylethanolamine (PtdEtn) from phosphatidylserine (PtdSer). The sequence is that of Phosphatidylserine decarboxylase proenzyme from Pseudoalteromonas atlantica (strain T6c / ATCC BAA-1087).